Consider the following 890-residue polypeptide: Alanine--tRNA ligase (890 aa).

Zn(2+) contacts are provided by H564, H568, C677, and H681.

It belongs to the class-II aminoacyl-tRNA synthetase family. Zn(2+) serves as cofactor.

The protein localises to the cytoplasm. It carries out the reaction tRNA(Ala) + L-alanine + ATP = L-alanyl-tRNA(Ala) + AMP + diphosphate. Catalyzes the attachment of alanine to tRNA(Ala) in a two-step reaction: alanine is first activated by ATP to form Ala-AMP and then transferred to the acceptor end of tRNA(Ala). Also edits incorrectly charged Ser-tRNA(Ala) and Gly-tRNA(Ala) via its editing domain. This Rhodopseudomonas palustris (strain BisB18) protein is Alanine--tRNA ligase.